The chain runs to 122 residues: Large ribosomal subunit protein uL14 (122 aa).

Belongs to the universal ribosomal protein uL14 family. In terms of assembly, part of the 50S ribosomal subunit. Forms a cluster with proteins L3 and L19. In the 70S ribosome, L14 and L19 interact and together make contacts with the 16S rRNA in bridges B5 and B8.

Binds to 23S rRNA. Forms part of two intersubunit bridges in the 70S ribosome. This Acetivibrio thermocellus (strain ATCC 27405 / DSM 1237 / JCM 9322 / NBRC 103400 / NCIMB 10682 / NRRL B-4536 / VPI 7372) (Clostridium thermocellum) protein is Large ribosomal subunit protein uL14.